The following is a 317-amino-acid chain: Beta-ketoacyl-[acyl-carrier-protein] synthase III (317 aa).

Catalysis depends on residues Cys-112 and His-244. Positions 245-249 (QANLR) are ACP-binding. Residue Asn-274 is part of the active site.

Belongs to the thiolase-like superfamily. FabH family. Homodimer.

It is found in the cytoplasm. The catalysed reaction is malonyl-[ACP] + acetyl-CoA + H(+) = 3-oxobutanoyl-[ACP] + CO2 + CoA. The protein operates within lipid metabolism; fatty acid biosynthesis. Catalyzes the condensation reaction of fatty acid synthesis by the addition to an acyl acceptor of two carbons from malonyl-ACP. Catalyzes the first condensation reaction which initiates fatty acid synthesis and may therefore play a role in governing the total rate of fatty acid production. Possesses both acetoacetyl-ACP synthase and acetyl transacylase activities. Its substrate specificity determines the biosynthesis of branched-chain and/or straight-chain of fatty acids. The chain is Beta-ketoacyl-[acyl-carrier-protein] synthase III from Salmonella paratyphi A (strain ATCC 9150 / SARB42).